Consider the following 620-residue polypeptide: Probable potassium transport system protein Kup 2 (620 aa).

The next 12 helical transmembrane spans lie at 10 to 30 (LLVSAVGVVFGDIGTSPLYAL), 50 to 70 (VLSLVFWTVMLLVTVKYVIVI), 102 to 122 (MMLGVIAAALFYGDSMITPAI), 136 to 156 (PDLRPYVVPITAVVLTALFAI), 168 to 188 (FGPVMCLWFITLAVLGIVNVI), 211 to 231 (LMSFYALGSVVLAVTGGEALY), 246 to 266 (WFCLVLPALLLNYFGQGALLI), 284 to 304 (MVVPLVALATFAAVIASQAVI), 336 to 356 (IYVPFTNWTLYLAVMALVVGF), 368 to 388 (IAVTSTMMIDTILVSFVMALL), 393 to 413 (MALVITVVGTLLAVDIAFFSA), and 415 to 435 (IIKVAQGGWFPLFIGFISFTV).

This sequence belongs to the HAK/KUP transporter (TC 2.A.72) family.

The protein resides in the cell inner membrane. It catalyses the reaction K(+)(in) + H(+)(in) = K(+)(out) + H(+)(out). Transport of potassium into the cell. Likely operates as a K(+):H(+) symporter. This Rhodopseudomonas palustris (strain BisB5) protein is Probable potassium transport system protein Kup 2.